A 125-amino-acid chain; its full sequence is Ribosome-binding factor A (125 aa).

The protein belongs to the RbfA family. Monomer. Binds 30S ribosomal subunits, but not 50S ribosomal subunits or 70S ribosomes.

It is found in the cytoplasm. Functionally, one of several proteins that assist in the late maturation steps of the functional core of the 30S ribosomal subunit. Associates with free 30S ribosomal subunits (but not with 30S subunits that are part of 70S ribosomes or polysomes). Required for efficient processing of 16S rRNA. May interact with the 5'-terminal helix region of 16S rRNA. This is Ribosome-binding factor A from Methylobacillus flagellatus (strain ATCC 51484 / DSM 6875 / VKM B-1610 / KT).